The following is a 505-amino-acid chain: RNA-splicing ligase RtcB homolog (505 aa).

D119, C122, H227, and H259 together coordinate Mn(2+). A GMP-binding site is contributed by N226–E230. S300 carries the phosphoserine modification. Position 353 (H353) interacts with Mn(2+). GMP contacts are provided by residues H353 to N354, G402 to M405, S409, and H428 to G431. The GMP-histidine intermediate role is filled by H428. Residue K496 forms a Glycyl lysine isopeptide (Lys-Gly) (interchain with G-Cter in SUMO2) linkage. K504 serves as a coordination point for GMP.

This sequence belongs to the RtcB family. In terms of assembly, catalytic component of the tRNA-splicing ligase complex. Mn(2+) serves as cofactor.

Its subcellular location is the nucleus. It localises to the cytoplasm. The enzyme catalyses a 3'-end 3'-phospho-ribonucleotide-RNA + a 5'-end dephospho-ribonucleoside-RNA + GTP = a ribonucleotidyl-ribonucleotide-RNA + GMP + diphosphate. It carries out the reaction a 3'-end 2',3'-cyclophospho-ribonucleotide-RNA + a 5'-end dephospho-ribonucleoside-RNA + GTP + H2O = a ribonucleotidyl-ribonucleotide-RNA + GMP + diphosphate + H(+). Its function is as follows. Catalytic subunit of the tRNA-splicing ligase complex that acts by directly joining spliced tRNA halves to mature-sized tRNAs by incorporating the precursor-derived splice junction phosphate into the mature tRNA as a canonical 3',5'-phosphodiester. May act as an RNA ligase with broad substrate specificity, and may function toward other RNAs. This Sus scrofa (Pig) protein is RNA-splicing ligase RtcB homolog.